Reading from the N-terminus, the 188-residue chain is Elongation factor P (188 aa).

Belongs to the elongation factor P family.

It is found in the cytoplasm. The protein operates within protein biosynthesis; polypeptide chain elongation. Its function is as follows. Involved in peptide bond synthesis. Stimulates efficient translation and peptide-bond synthesis on native or reconstituted 70S ribosomes in vitro. Probably functions indirectly by altering the affinity of the ribosome for aminoacyl-tRNA, thus increasing their reactivity as acceptors for peptidyl transferase. This is Elongation factor P from Rickettsia rickettsii (strain Iowa).